A 640-amino-acid chain; its full sequence is Serine/threonine-protein kinase ELM1 (640 aa).

The disordered stretch occupies residues 27–47; that stretch reads ELDSPPITPTSQTSSFGSSFS. The segment covering 35–47 has biased composition (low complexity); that stretch reads PTSQTSSFGSSFS. The region spanning 88 to 420 is the Protein kinase domain; it reads YTLGVSAGSG…PIDSRNHSQI (333 aa). ATP-binding positions include 94–102 and K117; that span reads AGSGQFGYV. Residue S152 is modified to Phosphoserine. D259 serves as the catalytic Proton acceptor. 2 positions are modified to phosphoserine: S516 and S519. Over residues 520–529 the composition is skewed to polar residues; that stretch reads LPNLTVNNDK. 2 disordered regions span residues 520 to 547 and 562 to 587; these read LPNL…HSSL and SPKE…MDRT. The span at 530 to 541 shows a compositional bias: basic and acidic residues; that stretch reads QNSDMKTDRSES. The segment covering 569–579 has biased composition (polar residues); it reads RTHINCSQDKP.

It belongs to the protein kinase superfamily. Ser/Thr protein kinase family. Mg(2+) serves as cofactor.

The catalysed reaction is L-seryl-[protein] + ATP = O-phospho-L-seryl-[protein] + ADP + H(+). It catalyses the reaction L-threonyl-[protein] + ATP = O-phospho-L-threonyl-[protein] + ADP + H(+). Functionally, important role in G1 events required for bud emergence and septin organization. Coordinates cell growth and cell division at G2/M, essential for efficient cytokinesis and for regulation of SWE1. The chain is Serine/threonine-protein kinase ELM1 (ELM1) from Saccharomyces cerevisiae (strain ATCC 204508 / S288c) (Baker's yeast).